We begin with the raw amino-acid sequence, 434 residues long: Nicotinate phosphoribosyltransferase (434 aa).

His242 is subject to Phosphohistidine; by autocatalysis.

It belongs to the NAPRTase family. Post-translationally, transiently phosphorylated on a His residue during the reaction cycle. Phosphorylation strongly increases the affinity for substrates and increases the rate of nicotinate D-ribonucleotide production. Dephosphorylation regenerates the low-affinity form of the enzyme, leading to product release.

It catalyses the reaction nicotinate + 5-phospho-alpha-D-ribose 1-diphosphate + ATP + H2O = nicotinate beta-D-ribonucleotide + ADP + phosphate + diphosphate. It participates in cofactor biosynthesis; NAD(+) biosynthesis; nicotinate D-ribonucleotide from nicotinate: step 1/1. In terms of biological role, catalyzes the synthesis of beta-nicotinate D-ribonucleotide from nicotinate and 5-phospho-D-ribose 1-phosphate at the expense of ATP. The sequence is that of Nicotinate phosphoribosyltransferase from Agrobacterium fabrum (strain C58 / ATCC 33970) (Agrobacterium tumefaciens (strain C58)).